The chain runs to 472 residues: Aspartyl/glutamyl-tRNA(Asn/Gln) amidotransferase subunit B (472 aa).

It belongs to the GatB/GatE family. GatB subfamily. Heterotrimer of A, B and C subunits.

The catalysed reaction is L-glutamyl-tRNA(Gln) + L-glutamine + ATP + H2O = L-glutaminyl-tRNA(Gln) + L-glutamate + ADP + phosphate + H(+). It carries out the reaction L-aspartyl-tRNA(Asn) + L-glutamine + ATP + H2O = L-asparaginyl-tRNA(Asn) + L-glutamate + ADP + phosphate + 2 H(+). Allows the formation of correctly charged Asn-tRNA(Asn) or Gln-tRNA(Gln) through the transamidation of misacylated Asp-tRNA(Asn) or Glu-tRNA(Gln) in organisms which lack either or both of asparaginyl-tRNA or glutaminyl-tRNA synthetases. The reaction takes place in the presence of glutamine and ATP through an activated phospho-Asp-tRNA(Asn) or phospho-Glu-tRNA(Gln). The sequence is that of Aspartyl/glutamyl-tRNA(Asn/Gln) amidotransferase subunit B from Campylobacter jejuni (strain RM1221).